The chain runs to 380 residues: cAMP-dependent protein kinase type I-alpha regulatory subunit (380 aa).

At methionine 1 the chain carries N-acetylmethionine. Alanine 2 carries the N-acetylalanine; in cAMP-dependent protein kinase type I-alpha regulatory subunit, N-terminally processed modification. The dimerization and phosphorylation stretch occupies residues 2–135 (ASGTTASEEE…ALAKAIEKNV (134 aa)). Phosphoserine is present on residues serine 3, serine 76, and serine 82. Residues 64-96 (IQNLQKAGSRADSREDEISPPPPNPVVKGRRRR) are disordered. Positions 95–99 (RRGAI) match the Pseudophosphorylation motif motif. The residue at position 100 (serine 100) is a Phosphoserine. 3',5'-cyclic AMP-binding positions include 136 to 253 (LFSH…SKVS), glutamate 201, arginine 210, 254 to 380 (ILES…SLSV), glutamate 325, and arginine 334. Phosphoserine is present on serine 257.

Belongs to the cAMP-dependent kinase regulatory chain family. As to quaternary structure, the inactive holoenzyme is composed of two regulatory chains and two catalytic chains. Activation by cAMP releases the two active catalytic monomers and the regulatory dimer. Interacts with PRKACA and PRKACB. PRKAR1A also interacts with RFC2; the complex may be involved in cell survival. Interacts with AKAP4. Interacts with RARA; the interaction occurs in the presence of cAMP or FSH and regulates RARA transcriptional activity. Interacts with the phosphorylated form of PJA2. Interacts with CBFA2T3. Interacts with PRKX; regulates this cAMP-dependent protein kinase. Interacts with smAKAP; this interaction may target PRKAR1A to the plasma membrane. Interacts with AICDA. The pseudophosphorylation site binds to the substrate-binding region of the catalytic chain, resulting in the inhibition of its activity. The physiological significance of the in vitro phosphorylation of a proximal serine is unclear. As to expression, four types of regulatory chains are found: I-alpha, I-beta, II-alpha, and II-beta. Their expression varies among tissues and is in some cases constitutive and in others inducible.

It is found in the cell membrane. Functionally, regulatory subunit of the cAMP-dependent protein kinases involved in cAMP signaling in cells. This chain is cAMP-dependent protein kinase type I-alpha regulatory subunit (PRKAR1A), found in Bos taurus (Bovine).